Consider the following 792-residue polypeptide: Ribonucleoside-diphosphate reductase large subunit (792 aa).

One can recognise an ATP-cone domain in the interval 1-92 (MHVIKRDGRQ…VSNLHKEAKK (92 aa)). ATP contacts are provided by residues 5–6 (KR), 11–17 (ERVMFDK), Thr53, and Asp57. Lys17 bears the N6-acetyllysine mark. Ser202 and Ser217 together coordinate GDP. Cys218 and Cys444 are oxidised to a cystine. DTTP is bound by residues 226–228 (DSI), Lys243, Arg256, and 263–264 (AG). Residue Lys376 is modified to N6-acetyllysine. Ser427 (proton acceptor) is an active-site residue. The Cysteine radical intermediate role is filled by Cys429. Residues Glu431 and 604–607 (TAST) each bind GDP. Glu431 functions as the Proton acceptor in the catalytic mechanism. Thr751 bears the Phosphothreonine mark.

The protein belongs to the ribonucleoside diphosphate reductase large chain family. As to quaternary structure, heterodimer of a large and a small subunit. Interacts with RRM2B. Interacts with AHCYL1 which inhibits its activity.

It localises to the cytoplasm. It catalyses the reaction a 2'-deoxyribonucleoside 5'-diphosphate + [thioredoxin]-disulfide + H2O = a ribonucleoside 5'-diphosphate + [thioredoxin]-dithiol. Under complex allosteric control mediated by deoxynucleoside triphosphates and ATP binding to separate specificity and activation sites on the M1 subunit. The type of nucleotide bound at the specificity site determines substrate preference. It seems probable that ATP makes the enzyme reduce CDP and UDP, dGTP favors ADP reduction and dTTP favors GDP reduction. Stimulated by ATP and inhibited by dATP binding to the activity site, the dATP inhibition is mediated by AHCYL1 which stabilizes dATP in the site. Functionally, provides the precursors necessary for DNA synthesis. Catalyzes the biosynthesis of deoxyribonucleotides from the corresponding ribonucleotides. In Pongo abelii (Sumatran orangutan), this protein is Ribonucleoside-diphosphate reductase large subunit (RRM1).